Consider the following 440-residue polypeptide: MFCLNTFKSRWPREFQNLKKKKKKTCVKLSIPIRSVTGDAASLTVVVTMYKRDDYVRNKPGGVFSRWQGFARSMLLPKPFSETAELRRTVADYSLISRGLAPKILREAKGNREDLRVGKDFVGSRYRVQESIQGLGVAVNIHDADDISHGQTESIRTRLRSYGRPVPLLKKLGDNASQTITQKKTGGRSKDKKHGFEEERDVSRVEAEENNTNSVHASVLRLSRSRPQPVLERHDDIVDGSDSASVCGVLQEDGTTCLTAPVTGRKRCTEHKGQRITCAPPVKNPPCEEETEEICGVILPEMVRCRSKPVSGRKRCEDHKGMRVNAFFFLLNPTERDKILKEDKSKPKTRTSSTNQEEPGESLICEATTKNGLPCTRSAPNGSKRCWQHKDETVDQKSSENVQTSTTVCGVKLHNGSVCEKTPVKGRKRCQEHKGMRITS.

One can recognise a GIY-YIG domain in the interval 131-167 (SIQGLGVAVNIHDADDISHGQTESIRTRLRSYGRPVP). Residues 172–216 (LGDNASQTITQKKTGGRSKDKKHGFEEERDVSRVEAEENNTNSVH) form a disordered region. The segment covering 175 to 184 (NASQTITQKK) has biased composition (polar residues). Positions 194 to 207 (HGFEEERDVSRVEA) are enriched in basic and acidic residues. Cx9Cx9RCx2HK repeat units follow at residues 247–272 (CGVLQEDGTTCLTAPVTGRKRCTEHK) and 295–320 (CGVILPEMVRCRSKPVSGRKRCEDHK). The interval 339-363 (ILKEDKSKPKTRTSSTNQEEPGESL) is disordered. Cx9Cx9RCx2HK repeat units follow at residues 365–390 (CEATTKNGLPCTRSAPNGSKRCWQHK) and 409–434 (CGVKLHNGSVCEKTPVKGRKRCQEHK).

Its subcellular location is the nucleus. Functionally, transcription regulator that negatively modulates gibberellin-mediated developmental processes. May act as transcriptional repressor of giberellin controlled genes. Binds DNA without sequence preference. This is Protein EFFECTOR OF TRANSCRIPTION from Brassica napus (Rape).